Consider the following 1227-residue polypeptide: ATP-dependent helicase/nuclease subunit A (1227 aa).

One can recognise a UvrD-like helicase ATP-binding domain in the interval 37–503 (QKRTAEQIEA…ILLKENFRSQ (467 aa)). 58–65 (ASAGSGKT) is a binding site for ATP. Positions 532 to 816 (SLVAGSPGQK…QLMTIHKSKG (285 aa)) constitute a UvrD-like helicase C-terminal domain.

The protein belongs to the helicase family. AddA subfamily. As to quaternary structure, heterodimer of AddA and AddB/RexB. It depends on Mg(2+) as a cofactor.

The catalysed reaction is Couples ATP hydrolysis with the unwinding of duplex DNA by translocating in the 3'-5' direction.. It carries out the reaction ATP + H2O = ADP + phosphate + H(+). The heterodimer acts as both an ATP-dependent DNA helicase and an ATP-dependent, dual-direction single-stranded exonuclease. Recognizes the chi site generating a DNA molecule suitable for the initiation of homologous recombination. The AddA nuclease domain is required for chi fragment generation; this subunit has the helicase and 3' -&gt; 5' nuclease activities. In Streptococcus suis (strain 98HAH33), this protein is ATP-dependent helicase/nuclease subunit A.